Here is a 116-residue protein sequence, read N- to C-terminus: Phosphoribosyl-AMP cyclohydrolase (116 aa).

A Mg(2+)-binding site is contributed by Asp-80. Position 81 (Cys-81) interacts with Zn(2+). Positions 82 and 84 each coordinate Mg(2+). Positions 98 and 105 each coordinate Zn(2+).

This sequence belongs to the PRA-CH family. Homodimer. Mg(2+) serves as cofactor. Zn(2+) is required as a cofactor.

It localises to the cytoplasm. It catalyses the reaction 1-(5-phospho-beta-D-ribosyl)-5'-AMP + H2O = 1-(5-phospho-beta-D-ribosyl)-5-[(5-phospho-beta-D-ribosylamino)methylideneamino]imidazole-4-carboxamide. The protein operates within amino-acid biosynthesis; L-histidine biosynthesis; L-histidine from 5-phospho-alpha-D-ribose 1-diphosphate: step 3/9. Catalyzes the hydrolysis of the adenine ring of phosphoribosyl-AMP. This chain is Phosphoribosyl-AMP cyclohydrolase, found in Trichormus variabilis (strain ATCC 29413 / PCC 7937) (Anabaena variabilis).